Here is a 127-residue protein sequence, read N- to C-terminus: Protein ApaG (127 aa).

In terms of domain architecture, ApaG spans 3–127; it reads NNPSSKIEVA…FVLSVPRTLH (125 aa).

This chain is Protein ApaG, found in Xylella fastidiosa (strain M23).